The primary structure comprises 429 residues: Saccharopine dehydrogenase-like oxidoreductase (429 aa).

The residue at position 2 (alanine 2) is an N-acetylalanine. A phosphoserine mark is found at serine 209, serine 215, and serine 217.

The protein belongs to the saccharopine dehydrogenase family.

This is Saccharopine dehydrogenase-like oxidoreductase (Sccpdh) from Rattus norvegicus (Rat).